A 1488-amino-acid polypeptide reads, in one-letter code: Vacuolar protein sorting/targeting protein 10 (1488 aa).

The N-terminal stretch at Met-1–Ala-23 is a signal peptide. Topologically, residues Lys-24–His-1351 are lumenal. Residues Arg-63–Ser-72 form a BNR 1 repeat. Asn-301 and Asn-325 each carry an N-linked (GlcNAc...) asparagine glycan. BNR repeat units lie at residues Ile-380–Gln-389 and Tyr-440–Arg-450. Asn-481 carries N-linked (GlcNAc...) asparagine glycosylation. 2 BNR repeats span residues Tyr-482–Trp-490 and Tyr-720–Glu-730. N-linked (GlcNAc...) asparagine glycans are attached at residues Asn-845 and Asn-967. 2 BNR repeats span residues Phe-1102–Lys-1112 and Tyr-1144–Glu-1153. Asn-1266 is a glycosylation site (N-linked (GlcNAc...) asparagine). A helical transmembrane segment spans residues Gly-1352 to Ala-1372. The Cytoplasmic portion of the chain corresponds to Gly-1373 to Trp-1405. A helical membrane pass occupies residues Leu-1406 to Leu-1426. The Lumenal segment spans residues Leu-1427–Ala-1488.

The protein belongs to the VPS10-related sortilin family.

The protein resides in the golgi apparatus. The protein localises to the trans-Golgi network membrane. It localises to the prevacuolar compartment membrane. Functions as a sorting receptor in the Golgi compartment required for the intracellular sorting and delivery of soluble vacuolar proteins, like carboxypeptidase Y (CPY) and proteinase A. Executes multiple rounds of sorting by cycling between the late Golgi and a prevacuolar endosome-like compartment. This Aspergillus oryzae (strain ATCC 42149 / RIB 40) (Yellow koji mold) protein is Vacuolar protein sorting/targeting protein 10 (vps10).